The chain runs to 195 residues: Holliday junction branch migration complex subunit RuvA (195 aa).

Residues Met-1 to Ala-63 form a domain I region. Positions Asp-64–Gly-138 are domain II. The flexible linker stretch occupies residues Gly-138–Ala-142. Residues Gly-143–Lys-195 are domain III.

It belongs to the RuvA family. Homotetramer. Forms an RuvA(8)-RuvB(12)-Holliday junction (HJ) complex. HJ DNA is sandwiched between 2 RuvA tetramers; dsDNA enters through RuvA and exits via RuvB. An RuvB hexamer assembles on each DNA strand where it exits the tetramer. Each RuvB hexamer is contacted by two RuvA subunits (via domain III) on 2 adjacent RuvB subunits; this complex drives branch migration. In the full resolvosome a probable DNA-RuvA(4)-RuvB(12)-RuvC(2) complex forms which resolves the HJ.

The protein localises to the cytoplasm. Its function is as follows. The RuvA-RuvB-RuvC complex processes Holliday junction (HJ) DNA during genetic recombination and DNA repair, while the RuvA-RuvB complex plays an important role in the rescue of blocked DNA replication forks via replication fork reversal (RFR). RuvA specifically binds to HJ cruciform DNA, conferring on it an open structure. The RuvB hexamer acts as an ATP-dependent pump, pulling dsDNA into and through the RuvAB complex. HJ branch migration allows RuvC to scan DNA until it finds its consensus sequence, where it cleaves and resolves the cruciform DNA. This Mycolicibacterium gilvum (strain PYR-GCK) (Mycobacterium gilvum (strain PYR-GCK)) protein is Holliday junction branch migration complex subunit RuvA.